Reading from the N-terminus, the 89-residue chain is Small ribosomal subunit protein uS15 (89 aa).

The protein belongs to the universal ribosomal protein uS15 family. In terms of assembly, part of the 30S ribosomal subunit. Forms a bridge to the 50S subunit in the 70S ribosome, contacting the 23S rRNA.

One of the primary rRNA binding proteins, it binds directly to 16S rRNA where it helps nucleate assembly of the platform of the 30S subunit by binding and bridging several RNA helices of the 16S rRNA. Its function is as follows. Forms an intersubunit bridge (bridge B4) with the 23S rRNA of the 50S subunit in the ribosome. This is Small ribosomal subunit protein uS15 from Mannheimia succiniciproducens (strain KCTC 0769BP / MBEL55E).